We begin with the raw amino-acid sequence, 204 residues long: Ribosome maturation factor RimP (204 aa).

Residues 176-204 (GNFDESQFDEIEESEGEEADEAEQPPTKH) form a disordered region. The segment covering 181–198 (SQFDEIEESEGEEADEAE) has biased composition (acidic residues).

Belongs to the RimP family.

The protein localises to the cytoplasm. Its function is as follows. Required for maturation of 30S ribosomal subunits. This chain is Ribosome maturation factor RimP, found in Cereibacter sphaeroides (strain ATCC 17029 / ATH 2.4.9) (Rhodobacter sphaeroides).